The following is a 104-amino-acid chain: Large ribosomal subunit protein bL21 (104 aa).

This sequence belongs to the bacterial ribosomal protein bL21 family. As to quaternary structure, part of the 50S ribosomal subunit. Contacts protein L20.

Functionally, this protein binds to 23S rRNA in the presence of protein L20. The polypeptide is Large ribosomal subunit protein bL21 (Streptococcus equi subsp. equi (strain 4047)).